Consider the following 473-residue polypeptide: Benzoyl-CoA oxygenase component B (473 aa).

It belongs to the benzoyl-CoA oxygenase component B family. Monomer. The subunit composition of the active BoxA/BoxB protein complex is not known. Requires Fe cation as cofactor.

The enzyme catalyses benzoyl-CoA + NADPH + O2 + H(+) = 2,3-epoxy-2,3-dihydrobenzoyl-CoA + NADP(+) + H2O. In terms of biological role, the BoxA/BoxB complex catalyzes the aerobic reduction/oxygenation of the aromatic ring of benzoyl-CoA to form 2,3-epoxy-2,3-dihydrobenzoyl-CoA. BoxB acts as the benzoyl-CoA oxygenase, after being reduced by the reductase component BoxA. BoxAB does not act on NADH or benzoate. The sequence is that of Benzoyl-CoA oxygenase component B (boxB) from Aromatoleum evansii (Azoarcus evansii).